The chain runs to 153 residues: Peptidyl-prolyl cis-trans isomerase FKBP15-1 (153 aa).

An N-terminal signal peptide occupies residues 1–25; sequence MMSSASAMKAVGFLLLLTILTLAYA. A PPIase FKBP-type domain is found at 52–140; that stretch reads GDKIKVHYRG…IFDTELVAVN (89 aa). The short motif at 150-153 is the Prevents secretion from ER element; the sequence is KNEL.

This sequence belongs to the FKBP-type PPIase family.

Its subcellular location is the endoplasmic reticulum lumen. The enzyme catalyses [protein]-peptidylproline (omega=180) = [protein]-peptidylproline (omega=0). In terms of biological role, PPIases accelerate the folding of proteins. It catalyzes the cis-trans isomerization of proline imidic peptide bonds in oligopeptides. The sequence is that of Peptidyl-prolyl cis-trans isomerase FKBP15-1 (FKBP15-1) from Arabidopsis thaliana (Mouse-ear cress).